The primary structure comprises 462 residues: Probable Xaa-Pro aminopeptidase NECHADRAFT_60613 (462 aa).

The Mn(2+) site is built by Asp-259, Asp-270, Glu-393, and Glu-433.

This sequence belongs to the peptidase M24B family. Mn(2+) serves as cofactor.

The catalysed reaction is Release of any N-terminal amino acid, including proline, that is linked to proline, even from a dipeptide or tripeptide.. Catalyzes the removal of a penultimate prolyl residue from the N-termini of peptides. The protein is Probable Xaa-Pro aminopeptidase NECHADRAFT_60613 of Fusarium vanettenii (strain ATCC MYA-4622 / CBS 123669 / FGSC 9596 / NRRL 45880 / 77-13-4) (Fusarium solani subsp. pisi).